The sequence spans 440 residues: Enolase (440 aa).

Q168 lines the (2R)-2-phosphoglycerate pocket. Residue E210 is the Proton donor of the active site. Positions 249, 300, and 326 each coordinate Mg(2+). The (2R)-2-phosphoglycerate site is built by K351, R380, S381, and K402. K351 serves as the catalytic Proton acceptor.

This sequence belongs to the enolase family. Mg(2+) is required as a cofactor.

The protein localises to the cytoplasm. The protein resides in the secreted. It localises to the cell surface. The enzyme catalyses (2R)-2-phosphoglycerate = phosphoenolpyruvate + H2O. Its pathway is carbohydrate degradation; glycolysis; pyruvate from D-glyceraldehyde 3-phosphate: step 4/5. Catalyzes the reversible conversion of 2-phosphoglycerate (2-PG) into phosphoenolpyruvate (PEP). It is essential for the degradation of carbohydrates via glycolysis. The sequence is that of Enolase from Ureaplasma parvum serovar 3 (strain ATCC 27815 / 27 / NCTC 11736).